Reading from the N-terminus, the 212-residue chain is 7-carboxy-7-deazaguanine synthase (212 aa).

Residues 22-24 (LQG) and R37 contribute to the substrate site. The Radical SAM core domain maps to 28 to 212 (NTGMPAVFVR…VQTHKWAGIE (185 aa)). Residues C41, C45, and C48 each contribute to the [4Fe-4S] cluster site. Residue T50 coordinates Mg(2+). T78 contributes to the substrate binding site. Residues G80 and 122–124 (SPK) contribute to the S-adenosyl-L-methionine site.

Belongs to the radical SAM superfamily. 7-carboxy-7-deazaguanine synthase family. In terms of assembly, homodimer. [4Fe-4S] cluster is required as a cofactor. It depends on S-adenosyl-L-methionine as a cofactor. The cofactor is Mg(2+).

It carries out the reaction 6-carboxy-5,6,7,8-tetrahydropterin + H(+) = 7-carboxy-7-deazaguanine + NH4(+). Its pathway is purine metabolism; 7-cyano-7-deazaguanine biosynthesis. Its function is as follows. Catalyzes the complex heterocyclic radical-mediated conversion of 6-carboxy-5,6,7,8-tetrahydropterin (CPH4) to 7-carboxy-7-deazaguanine (CDG), a step common to the biosynthetic pathways of all 7-deazapurine-containing compounds. The polypeptide is 7-carboxy-7-deazaguanine synthase (Neisseria meningitidis serogroup B (strain ATCC BAA-335 / MC58)).